A 378-amino-acid polypeptide reads, in one-letter code: Long-chain-fatty-acid--luciferin-component ligase (378 aa).

The protein belongs to the LuxE family.

The catalysed reaction is a long-chain fatty acid + L-cysteinyl-[protein] + ATP = an S-(long-chain fatty acyl)-L-cysteinyl-[protein] + AMP + diphosphate. It participates in lipid metabolism; fatty acid reduction for biolumincescence. Functionally, acyl-protein synthetase activates tetradecanoic acid. It is a component of the fatty acid reductase complex responsible for converting tetradecanoic acid to the aldehyde which serves as substrate in the luciferase-catalyzed reaction. The chain is Long-chain-fatty-acid--luciferin-component ligase from Aliivibrio fischeri (Vibrio fischeri).